Consider the following 621-residue polypeptide: MGLLSDPVRRRALARLVLRLNAPLCVLSYVAGIAWFLALVFPPLTQRTYMSENAMGSTMVEEQFAGGDRARAFARDFAAHRKKSGALPVAWLERTMRSVGLEVYTQSFSRKLPFPDETHERYMVSGTNVYGILRAPRAASTESLVLTVPCGSDSTNSQAVGLLLALAAHFRGQIYWAKDIVFLVTEHDLLGTEAWLEAYHDVNVTGMQSSPLQGRAGAIQAAVALELSSDVVTSLDVAVEGLNGQLPNLDLLNLFQTFCQKGGLLCTLQGKLQPEDWTSLDGPLQGLQTLLLMVLRQASGRPHGSHGLFLRYRVEALTLRGINSFRQYKYDLVAVGKALEGMFRKLNHLLERLHQSFFLYLLPGLSRFVSIGLYMPAVGFLLLVLGLKALELWMQLHEAGMGLEEPGGAPGPSVPLPPSQGVGLASLVAPLLISQAMGLALYVLPVLGQHVATQHFPVAEAEAVVLTLLAIYAAGLALPHNTHRVVSTQAPDRGWMALKLVALIYLALQLGCIALTNFSLGFLLATTMVPTAALAKPHGPRTLYAALLVLTSPAATLLGSLFLWRELQEAPLSLAEGWQLFLAALAQGVLEHHTYGALLFPLLSLGLYPCWLLFWNVLFWK.

The Cytoplasmic segment spans residues 2–19; that stretch reads GLLSDPVRRRALARLVLR. The helical transmembrane segment at 20–41 threads the bilayer; sequence LNAPLCVLSYVAGIAWFLALVF. Over 42-370 the chain is Lumenal; the sequence is PPLTQRTYMS…LLPGLSRFVS (329 aa). A 2-acyl-6-[6-phosphoethanolamine-alpha-D-mannosyl-(1-&gt;2)-6-phosphoethanolamine-alpha-D-mannosyl-(1-&gt;6)-2-phosphoethanolamine-alpha-D-mannosyl-(1-&gt;4)-alpha-D-glucosaminyl]-1-(1-radyl,2-acyl-sn-glycero-3-phospho)-1D-myo-inositol-binding residues include tyrosine 49 and serine 51. Asparagine 203 carries an N-linked (GlcNAc...) asparagine glycan. Cysteines 259 and 266 form a disulfide. Positions 354, 355, and 356 each coordinate a 2-acyl-6-[6-phosphoethanolamine-alpha-D-mannosyl-(1-&gt;2)-6-phosphoethanolamine-alpha-D-mannosyl-(1-&gt;6)-2-phosphoethanolamine-alpha-D-mannosyl-(1-&gt;4)-alpha-D-glucosaminyl]-1-(1-radyl,2-acyl-sn-glycero-3-phospho)-1D-myo-inositol. Residue glutamine 355 participates in Mg(2+) binding. Residues 371-393 form a helical membrane-spanning segment; it reads IGLYMPAVGFLLLVLGLKALELW. Residues 394-425 lie on the Cytoplasmic side of the membrane; it reads MQLHEAGMGLEEPGGAPGPSVPLPPSQGVGLA. The helical transmembrane segment at 426–450 threads the bilayer; that stretch reads SLVAPLLISQAMGLALYVLPVLGQH. Over 451-462 the chain is Lumenal; sequence VATQHFPVAEAE. A helical membrane pass occupies residues 463 to 483; it reads AVVLTLLAIYAAGLALPHNTH. The Cytoplasmic portion of the chain corresponds to 484-495; it reads RVVSTQAPDRGW. The next 2 membrane-spanning stretches (helical) occupy residues 496 to 519 and 520 to 536; these read MALKLVALIYLALQLGCIALTNFS and LGFLLATTMVPTAALAK. Residues 537–540 lie on the Cytoplasmic side of the membrane; it reads PHGP. Residues 541-563 form a helical membrane-spanning segment; the sequence is RTLYAALLVLTSPAATLLGSLFL. The Lumenal segment spans residues 564–597; that stretch reads WRELQEAPLSLAEGWQLFLAALAQGVLEHHTYGA. The chain crosses the membrane as a helical span at residues 598-619; it reads LLFPLLSLGLYPCWLLFWNVLF. The Cytoplasmic segment spans residues 620 to 621; that stretch reads WK.

In terms of assembly, heteropentamer. Part of the GPI-anchor transamidase complex, consisting of PIGK, PIGT, PIGS, PIGU and GAA1. Interacts with PIGK. As to expression, ubiquitously expressed in fetal and adult tissues. Expressed at higher levels in fetal tissues than adult tissues.

It is found in the endoplasmic reticulum membrane. It participates in glycolipid biosynthesis; glycosylphosphatidylinositol-anchor biosynthesis. Its function is as follows. Component of the glycosylphosphatidylinositol-anchor (GPI-anchor) transamidase (GPI-T) complex that catalyzes the formation of the linkage between a proprotein and a GPI-anchor and participates in GPI anchored protein biosynthesis. Binds GPI-anchor. The sequence is that of GPI-anchor transamidase component GPAA1 from Homo sapiens (Human).